Here is a 142-residue protein sequence, read N- to C-terminus: Ribosome-binding factor A (142 aa).

The interval 119–142 (EAKQKQHGVETDAEQGETKDEGDK) is disordered.

This sequence belongs to the RbfA family. As to quaternary structure, monomer. Binds 30S ribosomal subunits, but not 50S ribosomal subunits or 70S ribosomes.

Its subcellular location is the cytoplasm. In terms of biological role, one of several proteins that assist in the late maturation steps of the functional core of the 30S ribosomal subunit. Associates with free 30S ribosomal subunits (but not with 30S subunits that are part of 70S ribosomes or polysomes). Required for efficient processing of 16S rRNA. May interact with the 5'-terminal helix region of 16S rRNA. The protein is Ribosome-binding factor A of Shewanella halifaxensis (strain HAW-EB4).